Here is a 134-residue protein sequence, read N- to C-terminus: Thionin-2.2 (134 aa).

An N-terminal signal peptide occupies residues 1–24 (MEGKTVISSLLIMSLVLAQIQVEA). 3 cysteine pairs are disulfide-bonded: cysteine 27/cysteine 64, cysteine 28/cysteine 56, and cysteine 40/cysteine 50. Residues 71–134 (DILENSGDAV…GGSTAAVKSA (64 aa)) constitute a propeptide, acidic domain.

The protein belongs to the plant thionin (TC 1.C.44) family. As to expression, low basal expression in seedlings. Also detected in rosette leaves.

It localises to the secreted. Functionally, thionins are small plant proteins which are toxic to animal cells. They seem to exert their toxic effect at the level of the cell membrane. Their precise function is not known. The chain is Thionin-2.2 (THI2.2) from Arabidopsis thaliana (Mouse-ear cress).